The chain runs to 508 residues: Adenosine deaminase (508 aa).

A signal peptide spans 1–18; sequence MFSQLVVWLLATSTVCLA.

Belongs to the metallo-dependent hydrolases superfamily. Adenosine and AMP deaminases family. ADGF subfamily. The cofactor is Zn(2+). As to expression, salivary gland (at protein level).

The protein resides in the secreted. The catalysed reaction is adenosine + H2O + H(+) = inosine + NH4(+). Functionally, catalyzes the deamination of adenosine to inosine. This Lutzomyia longipalpis (Sand fly) protein is Adenosine deaminase.